The chain runs to 187 residues: Glutathione peroxidase 7 (187 aa).

The signal sequence occupies residues 1–19 (MVAATVAAAWLLLWAAACA). The active site involves cysteine 57.

Belongs to the glutathione peroxidase family. In terms of tissue distribution, expressed in esophageal epithelial cells; expression is up-regulated after exposure to acidic bile acids.

Its subcellular location is the secreted. The catalysed reaction is 2 glutathione + H2O2 = glutathione disulfide + 2 H2O. It protects esophageal epithelia from hydrogen peroxide-induced oxidative stress. It suppresses acidic bile acid-induced reactive oxygen species (ROS) and protects against oxidative DNA damage and double-strand breaks. This chain is Glutathione peroxidase 7 (GPX7), found in Homo sapiens (Human).